A 1531-amino-acid chain; its full sequence is DNA topoisomerase 2-alpha (1531 aa).

At methionine 1 the chain carries N-acetylmethionine. Serine 4 is subject to Phosphoserine. Residue lysine 17 forms a Glycyl lysine isopeptide (Lys-Gly) (interchain with G-Cter in SUMO2) linkage. ATP-binding positions include asparagine 91, asparagine 120, and 148-150 (SSN). Glycyl lysine isopeptide (Lys-Gly) (interchain with G-Cter in SUMO2) cross-links involve residues lysine 156 and lysine 157. 161–168 (GRNGYGAK) provides a ligand contact to ATP. Lysine 261 is covalently cross-linked (Glycyl lysine isopeptide (Lys-Gly) (interchain with G-Cter in SUMO2)). A Phosphothreonine modification is found at threonine 282. The interaction with DNA stretch occupies residues 342 to 344 (KKK). Residue lysine 352 forms a Glycyl lysine isopeptide (Lys-Gly) (interchain with G-Cter in SUMO2) linkage. 376–378 (QTK) is an ATP binding site. Residues lysine 386, lysine 397, lysine 416, lysine 418, lysine 425, and lysine 440 each participate in a glycyl lysine isopeptide (Lys-Gly) (interchain with G-Cter in SUMO2) cross-link. The 118-residue stretch at 455–572 (CTLILTEGDS…SLLRHRFLEE (118 aa)) folds into the Toprim domain. Glutamate 461 is a binding site for Mg(2+). Residues lysine 466, lysine 480, and lysine 529 each participate in a glycyl lysine isopeptide (Lys-Gly) (interchain with G-Cter in SUMO2) cross-link. The Mg(2+) site is built by aspartate 541 and aspartate 543. Residues lysine 584, lysine 599, lysine 614, lysine 622, lysine 625, lysine 632, lysine 639, lysine 655, lysine 662, and lysine 676 each participate in a glycyl lysine isopeptide (Lys-Gly) (interchain with G-Cter in SUMO2) cross-link. Residues 715 to 1171 (IPSMVDGLKP…SPSDLWKEDL (457 aa)) form the Topo IIA-type catalytic domain. The active-site O-(5'-phospho-DNA)-tyrosine intermediate is the tyrosine 805. Residues 990-999 (KLQTSLTCNS) form an interaction with DNA region. Residues 1018-1028 (ILRDFFELRLK) carry the Nuclear export signal motif. A Glycyl lysine isopeptide (Lys-Gly) (interchain with G-Cter in SUMO2) cross-link involves residue lysine 1075. Disordered regions lie at residues 1090-1123 (WKEAQQKVPDEEENEESDNEKETEKSDSVTDSGP) and 1184-1531 (KEKQ…DDLF). Residues 1099-1108 (DEEENEESDN) show a composition bias toward acidic residues. The residue at position 1106 (serine 1106) is a Phosphoserine; by CK1. Residues lysine 1114, lysine 1196, and lysine 1204 each participate in a glycyl lysine isopeptide (Lys-Gly) (interchain with G-Cter in SUMO2) cross-link. The residue at position 1205 (threonine 1205) is a Phosphothreonine. Residue serine 1213 is modified to Phosphoserine. A Glycyl lysine isopeptide (Lys-Gly) (interchain with G-Cter in SUMO2) cross-link involves residue lysine 1228. Residue lysine 1240 forms a Glycyl lysine isopeptide (Lys-Gly) (interchain with G-Cter in SUMO1); alternate linkage. A Glycyl lysine isopeptide (Lys-Gly) (interchain with G-Cter in SUMO2); alternate cross-link involves residue lysine 1240. Position 1244 is a phosphothreonine (threonine 1244). Serine 1247 is modified (phosphoserine). Residues 1256 to 1272 (EGLKQRLEKKQKREPGT) show a composition bias toward basic and acidic residues. Glycyl lysine isopeptide (Lys-Gly) (interchain with G-Cter in SUMO2) cross-links involve residues lysine 1259, lysine 1276, lysine 1283, and lysine 1286. Residues serine 1295, serine 1297, serine 1299, and serine 1302 each carry the phosphoserine modification. A Phosphothreonine modification is found at threonine 1327. Residues 1330–1349 (LDSDEDFSDFDEKTDDEDFV) show a composition bias toward acidic residues. Phosphoserine is present on residues serine 1332 and serine 1337. The residue at position 1343 (threonine 1343) is a Phosphothreonine; by PLK3. Serine 1351 and serine 1354 each carry phosphoserine. Residues lysine 1363, lysine 1367, and lysine 1373 each participate in a glycyl lysine isopeptide (Lys-Gly) (interchain with G-Cter in SUMO2) cross-link. Residues serine 1374 and serine 1377 each carry the phosphoserine modification. Lysine 1385 participates in a covalent cross-link: Glycyl lysine isopeptide (Lys-Gly) (interchain with G-Cter in SUMO2). Serine 1387, serine 1391, serine 1392, and serine 1393 each carry phosphoserine. A compositionally biased stretch (low complexity) spans 1406–1431 (TNPVPKKNVTVKKTAAKSQSSTSTTG). Residue lysine 1422 forms a Glycyl lysine isopeptide (Lys-Gly) (interchain with G-Cter in SUMO2); alternate linkage. Lysine 1422 is subject to N6-acetyllysine; alternate. The tract at residues 1433-1439 (KKRAAPK) is interaction with PLSCR1. Residue lysine 1442 forms a Glycyl lysine isopeptide (Lys-Gly) (interchain with G-Cter in SUMO2); alternate linkage. Position 1442 is an N6-acetyllysine; alternate (lysine 1442). Serine 1449 carries the phosphoserine modification. Residues lysine 1454 and lysine 1459 each participate in a glycyl lysine isopeptide (Lys-Gly) (interchain with G-Cter in SUMO2) cross-link. Serine 1469 is modified (phosphoserine; by CK2). Threonine 1470 bears the Phosphothreonine mark. Serine 1471, serine 1474, and serine 1476 each carry phosphoserine. Residues lysine 1484 and lysine 1492 each participate in a glycyl lysine isopeptide (Lys-Gly) (interchain with G-Cter in SUMO2) cross-link. Residues 1491–1502 (SKGESDDFHMDF) show a composition bias toward basic and acidic residues. Phosphoserine is present on residues serine 1495, serine 1504, and serine 1525.

The protein belongs to the type II topoisomerase family. In terms of assembly, homodimer. Interacts with COPS5. Interacts with RECQL5; this stimulates DNA decatenation. Interacts with SETMAR; stimulates the topoisomerase activity. Interacts with DHX9; this interaction occurs in a E2 enzyme UBE2I- and RNA-dependent manner, negatively regulates DHX9-mediated double-stranded DNA and RNA duplex helicase activity and stimulates TOP2A-mediated supercoiled DNA relaxation activity. Interacts with HNRNPU (via C-terminus); this interaction protects the topoisomerase TOP2A from degradation and positively regulates the relaxation of supercoiled DNA in a RNA-dependent manner. Interacts with MCM3AP isoform GANP. Interacts with ERCC6. Interacts with PLSCR1. Interacts with GCNA; this interaction allows the resolution of topoisomerase II (TOP2A) DNA-protein cross-links. Interacts with POL1RA/RPA1 (via dock II) and UBTF in the context of Pol I complex; may assist Pol I transcription initiation by releasing supercoils occurring during DNA unwinding. Interacts with TPRN; TPRN interacts with a number of DNA damage response proteins, is recruited to sites of DNA damage and may play a role in DNA damage repair. Requires Mg(2+) as cofactor. Mn(2+) serves as cofactor. The cofactor is Ca(2+). Post-translationally, phosphorylation has no effect on catalytic activity. However, phosphorylation at Ser-1106 by CSNK1D/CK1 promotes DNA cleavable complex formation. (Microbial infection) Deubiquitinated by Epstein-Barr virus BPLF1; leading to stabilized SUMOylated TOP2A trapped in cleavage complexes, which halts the DNA damage response to TOP2A-induced double-strand DNA breaks. In terms of processing, SUMOylated. In terms of tissue distribution, expressed in the tonsil, spleen, lymph node, thymus, skin, pancreas, testis, colon, kidney, liver, brain and lung. Also found in high-grade lymphomas, squamous cell lung tumors and seminomas.

It is found in the cytoplasm. The protein resides in the nucleus. The protein localises to the nucleoplasm. Its subcellular location is the nucleolus. It catalyses the reaction ATP-dependent breakage, passage and rejoining of double-stranded DNA.. Specifically inhibited by the intercalating agent amsacrine. Functionally, key decatenating enzyme that alters DNA topology by binding to two double-stranded DNA molecules, generating a double-stranded break in one of the strands, passing the intact strand through the broken strand, and religating the broken strand. May play a role in regulating the period length of BMAL1 transcriptional oscillation. This chain is DNA topoisomerase 2-alpha (TOP2A), found in Homo sapiens (Human).